The sequence spans 480 residues: Aromatic-L-amino-acid decarboxylase (480 aa).

Methionine 1 bears the N-acetylmethionine mark. 2 repeat units span residues 58 to 115 (KDIE…TELE) and 118 to 178 (MMDW…TQAA). Positions 58-178 (KDIEKIIMPG…AASPEFTQAA (121 aa)) are 2 X approximate tandem repeats. Threonine 82 is a binding site for substrate. Pyridoxal 5'-phosphate is bound by residues alanine 148 and serine 149. Residue histidine 192 coordinates substrate. Threonine 246 and asparagine 300 together coordinate pyridoxal 5'-phosphate. Residue lysine 303 is modified to N6-(pyridoxal phosphate)lysine.

This sequence belongs to the group II decarboxylase family. As to quaternary structure, homodimer. It depends on pyridoxal 5'-phosphate as a cofactor.

The enzyme catalyses L-dopa + H(+) = dopamine + CO2. The catalysed reaction is 5-hydroxy-L-tryptophan + H(+) = serotonin + CO2. Its pathway is catecholamine biosynthesis; dopamine biosynthesis; dopamine from L-tyrosine: step 2/2. In terms of biological role, catalyzes the decarboxylation of L-3,4-dihydroxyphenylalanine (DOPA) to dopamine and L-5-hydroxytryptophan to serotonin. The chain is Aromatic-L-amino-acid decarboxylase (Ddc) from Mus musculus (Mouse).